A 190-amino-acid chain; its full sequence is Fe/S biogenesis protein NfuA (190 aa).

Residues cysteine 148 and cysteine 151 each contribute to the [4Fe-4S] cluster site.

It belongs to the NfuA family. In terms of assembly, homodimer. The cofactor is [4Fe-4S] cluster.

Its function is as follows. Involved in iron-sulfur cluster biogenesis. Binds a 4Fe-4S cluster, can transfer this cluster to apoproteins, and thereby intervenes in the maturation of Fe/S proteins. Could also act as a scaffold/chaperone for damaged Fe/S proteins. The chain is Fe/S biogenesis protein NfuA from Baumannia cicadellinicola subsp. Homalodisca coagulata.